Reading from the N-terminus, the 231-residue chain is Ribose-5-phosphate isomerase A (231 aa).

Substrate contacts are provided by residues 28-31 (TGST), 83-86 (DGAD), and 96-99 (KGGG). Glutamate 105 (proton acceptor) is an active-site residue. Residue lysine 123 coordinates substrate.

The protein belongs to the ribose 5-phosphate isomerase family. As to quaternary structure, homodimer.

The enzyme catalyses aldehydo-D-ribose 5-phosphate = D-ribulose 5-phosphate. Its pathway is carbohydrate degradation; pentose phosphate pathway; D-ribose 5-phosphate from D-ribulose 5-phosphate (non-oxidative stage): step 1/1. In terms of biological role, catalyzes the reversible conversion of ribose-5-phosphate to ribulose 5-phosphate. The sequence is that of Ribose-5-phosphate isomerase A from Sinorhizobium medicae (strain WSM419) (Ensifer medicae).